A 906-amino-acid chain; its full sequence is Probable RNA-directed DNA polymerase from transposon BS (906 aa).

In terms of domain architecture, Reverse transcriptase spans 482–758; that stretch reads AILRVQFFPK…SQAKYLGITL (277 aa).

Mg(2+) serves as cofactor. Requires Mn(2+) as cofactor.

It carries out the reaction DNA(n) + a 2'-deoxyribonucleoside 5'-triphosphate = DNA(n+1) + diphosphate. The chain is Probable RNA-directed DNA polymerase from transposon BS from Drosophila melanogaster (Fruit fly).